The chain runs to 175 residues: Ferritin light chain (175 aa).

An N-acetylserine modification is found at Ser-2. The Ferritin-like diiron domain occupies 7–156; that stretch reads QNYSTEVEAA…DHLTNIQRLV (150 aa). Residues Glu-54, Glu-57, Glu-58, Glu-61, and Glu-64 each coordinate Fe cation. The interval 54 to 61 is catalytic site for iron oxidation; that stretch reads ELAEEKRE.

It belongs to the ferritin family. As to quaternary structure, oligomer of 24 subunits. There are two types of subunits: L (light) chain and H (heavy) chain. The major chain can be light or heavy, depending on the species and tissue type. The functional molecule forms a roughly spherical shell with a diameter of 12 nm and contains a central cavity into which the insoluble mineral iron core is deposited. Interacts with NCOA4.

The protein localises to the cytoplasmic vesicle. The protein resides in the autophagosome. It localises to the cytoplasm. Its subcellular location is the autolysosome. In terms of biological role, stores iron in a soluble, non-toxic, readily available form. Important for iron homeostasis. Iron is taken up in the ferrous form and deposited as ferric hydroxides after oxidation. Also plays a role in delivery of iron to cells. Mediates iron uptake in capsule cells of the developing kidney. Delivery to lysosomes by the cargo receptor NCOA4 for autophagic degradation and release or iron. The polypeptide is Ferritin light chain (FTL) (Equus caballus (Horse)).